The chain runs to 309 residues: Ribonuclease Z (309 aa).

H63, H65, D67, H68, H141, D212, and H270 together coordinate Zn(2+). Residue D67 is the Proton acceptor of the active site.

The protein belongs to the RNase Z family. In terms of assembly, homodimer. It depends on Zn(2+) as a cofactor.

It catalyses the reaction Endonucleolytic cleavage of RNA, removing extra 3' nucleotides from tRNA precursor, generating 3' termini of tRNAs. A 3'-hydroxy group is left at the tRNA terminus and a 5'-phosphoryl group is left at the trailer molecule.. Functionally, zinc phosphodiesterase, which displays some tRNA 3'-processing endonuclease activity. Probably involved in tRNA maturation, by removing a 3'-trailer from precursor tRNA. This Lactobacillus johnsonii (strain CNCM I-12250 / La1 / NCC 533) protein is Ribonuclease Z.